The primary structure comprises 223 residues: Golgi SNAP receptor complex member 1 (223 aa).

N-acetylserine is present on Ser-2. Topologically, residues 2–204 are cytoplasmic; the sequence is SSQPSFVTIR…MKINTRRKKN (203 aa). At Ser-164 the chain carries Phosphoserine. The helical; Anchor for type IV membrane protein transmembrane segment at 205-222 threads the bilayer; it reads AFVLATITTLCILFLFFT. Position 223 (Trp-223) is a topological domain, vesicular.

The protein belongs to the GOSR1 family. As to quaternary structure, component of several multiprotein Golgi SNARE complexes. Identified in a Golgi SNARE complex consisting of t-SNARES SED5, YKT6, and the v-SNARE SFT1. Interacts with BET1. Interacts with BOS1. Interacts with SEC22. Interacts with PEP12. Interacts with self.

The protein localises to the golgi apparatus membrane. Functionally, involved in transport from the ER to the Golgi apparatus as well as in intra-Golgi transport. It belongs to a super-family of proteins called t-SNAREs or soluble NSF (N-ethylmaleimide-sensitive factor) attachment protein receptor. Rescues alpha-factor maturation defects. The protein is Golgi SNAP receptor complex member 1 (GOS1) of Saccharomyces cerevisiae (strain ATCC 204508 / S288c) (Baker's yeast).